We begin with the raw amino-acid sequence, 880 residues long: GRB2-associated and regulator of MAPK protein 2 (880 aa).

The segment at 12 to 320 (RWSMGAFPLD…HFLLLTDTPR (309 aa)) is CABIT. Disordered stretches follow at residues 385-407 (PGAVRAPGPPGRLGPALPAPGDS), 461-483 (IVGPPRHEPEAPPPPVPPKSEAV), 527-548 (SSLSYYSSGLQDGAGSRSGSGS), 569-611 (SESS…ADTP), and 633-713 (APFG…ELGQ). 2 stretches are compositionally biased toward low complexity: residues 640–663 (PFSGPAHPSGAPAASSSGSISTSG) and 683–696 (QGYSAAPSSSLSSS). Ser740 is modified (phosphoserine). Residues 813 to 877 (SALSLEEVSR…KIMQFIKGWR (65 aa)) enclose the SAM domain.

Belongs to the GAREM family.

Probable adapter protein that provides a critical link between cell surface epidermal growth factor receptor and the MAPK/ERK signaling pathway. The chain is GRB2-associated and regulator of MAPK protein 2 (Garem2) from Mus musculus (Mouse).